A 218-amino-acid chain; its full sequence is Adenylate kinase (218 aa).

14 to 19 (GAGKGT) contacts ATP. Positions 34–63 (STGDMFRAAIKAGTELGKQAKALMDEGKLV) are NMP. AMP contacts are provided by residues Thr35, Arg40, 61-63 (KLV), 89-92 (GFPR), and Gln96. The segment at 126-163 (GRRVHQASGRSYHIVYNPPKVEGKDDVTGEDLIIRADD) is LID. ATP-binding positions include Arg127 and 136–137 (SY). The AMP site is built by Arg160 and Arg171. Lys204 contacts ATP.

The protein belongs to the adenylate kinase family. In terms of assembly, monomer.

It is found in the cytoplasm. It catalyses the reaction AMP + ATP = 2 ADP. Its pathway is purine metabolism; AMP biosynthesis via salvage pathway; AMP from ADP: step 1/1. In terms of biological role, catalyzes the reversible transfer of the terminal phosphate group between ATP and AMP. Plays an important role in cellular energy homeostasis and in adenine nucleotide metabolism. This is Adenylate kinase from Mannheimia succiniciproducens (strain KCTC 0769BP / MBEL55E).